Consider the following 338-residue polypeptide: Popeye domain-containing protein 1 (338 aa).

Over 1–40 (MATESILITTLPMDLNSQINNVTFGLNENETLCENWREIH) the chain is Extracellular. Asn-21 and Asn-29 each carry an N-linked (GlcNAc...) asparagine glycan. Residues 41–61 (HLVFHLANTCFAAGLVIPSTL) form a helical membrane-spanning segment. Residues 62–65 (NLHM) lie on the Cytoplasmic side of the membrane. The chain crosses the membrane as a helical span at residues 66-86 (ILLRGMLCLGCIFFIIWAILF). The Extracellular portion of the chain corresponds to 87 to 91 (RCALD). The helical transmembrane segment at 92–112 (IMIWNATFLSMNFMHFIYLVY) threads the bilayer. Topologically, residues 113–338 (KKRPIKIEKD…VGPLSHAVFC (226 aa)) are cytoplasmic.

This sequence belongs to the popeye family.

Its subcellular location is the lateral cell membrane. It is found in the cell junction. The protein resides in the tight junction. It localises to the membrane. The protein localises to the cell membrane. Its subcellular location is the sarcolemma. It is found in the caveola. In terms of biological role, cell adhesion molecule involved in the establishment and/or maintenance of cell integrity. May play a role in vamp3-mediated vesicular transport and recycling of different receptor molecules. May be involved in the formation and regulation of the tight junction (TJ) paracellular permeability barrier in epithelial cells. May induce primordial adhesive contact and aggregation of epithelial cells in a Ca(2+)-independent manner. May be involved in epithelial movement during corneal sheet formation and regeneration. May play a role in the regulation of cell shape and movement by modulating the Rho-GTPase activity. May be involved in skeletal muscle and heart development as well as in the maintenance of heart function. May also be involved in striated muscle regeneration and in the regulation of cell spreading. The polypeptide is Popeye domain-containing protein 1 (popdc1) (Xenopus tropicalis (Western clawed frog)).